The following is a 395-amino-acid chain: General transcription factor IIH subunit 2-like protein (395 aa).

A VWFA domain is found at 60–236; sequence HLYVVVDGSR…HYKELLTHHL (177 aa). Tyr95 is modified (phosphotyrosine). A C4-type zinc finger spans residues 291–308; that stretch reads CPQCRAKYCELPVECKIC.

This sequence belongs to the GTF2H2 family.

The protein localises to the nucleus. Functionally, component of the core-TFIIH basal transcription factor involved in nucleotide excision repair (NER) of DNA and, when complexed to CAK, in RNA transcription by RNA polymerase II. The sequence is that of General transcription factor IIH subunit 2-like protein (GTF2H2C) from Homo sapiens (Human).